The primary structure comprises 1157 residues: ATP-dependent helicase/deoxyribonuclease subunit B (1157 aa).

A UvrD-like helicase ATP-binding domain is found at 1 to 299 (MSIRFIIGRA…SHLEKYFFVR (299 aa)). Residue 8–15 (GRAGAGKT) coordinates ATP. The UvrD-like helicase C-terminal domain maps to 279–590 (GNTARFKSPA…LVASLERSRN (312 aa)). [4Fe-4S] cluster is bound by residues C792, C1112, C1115, and C1121.

This sequence belongs to the helicase family. AddB/RexB type 1 subfamily. Heterodimer of AddA and AddB. The cofactor is Mg(2+). Requires [4Fe-4S] cluster as cofactor.

Functionally, the heterodimer acts as both an ATP-dependent DNA helicase and an ATP-dependent, dual-direction single-stranded exonuclease. Recognizes the chi site generating a DNA molecule suitable for the initiation of homologous recombination. The AddB subunit has 5' -&gt; 3' nuclease activity but not helicase activity. In Pelotomaculum thermopropionicum (strain DSM 13744 / JCM 10971 / SI), this protein is ATP-dependent helicase/deoxyribonuclease subunit B.